Reading from the N-terminus, the 244-residue chain is Protein crossbronx (244 aa).

Residues 20–176 (QQEYKILAEY…VQKNIKESKD (157 aa)) form the UBC core domain.

This sequence belongs to the ubiquitin-conjugating enzyme family. FTS subfamily.

This is Protein crossbronx (cbx) from Drosophila yakuba (Fruit fly).